The following is a 290-amino-acid chain: MEWSLTQNKLLAFHRLMRTDKPIGALLLLWPTLWALWVATPGVPQLWIMAVFVAGVWLMRAAGCVVNDYADRKFDGHVKRTANRPLPSGAVTEKEARALFVVLVLISFLLVLTLNTMTILLSIAALALAWVYPFMKRYTHLPQVVLGAAFGWSIPMAFAAVSESVPLSCWLMFLANILWAVAYDTQYAMVDRDDDVKIGIKSTAILFGQYDKLIIGILQIGVLALMAIIGELNGLGWGYYWSIVVAGALFVYQQKLIANREREACFKAFMNNNYVGLVLFLGLAMSYWHF.

8 helical membrane-spanning segments follow: residues 23-43 (IGAL…TPGV), 46-66 (LWIM…GCVV), 99-119 (LFVV…TMTI), 141-161 (LPQV…FAAV), 163-183 (ESVP…AVAY), 213-233 (LIIG…GELN), 234-254 (GLGW…VYQQ), and 268-288 (AFMN…MSYW).

Belongs to the UbiA prenyltransferase family. Mg(2+) is required as a cofactor.

It is found in the cell inner membrane. It carries out the reaction all-trans-octaprenyl diphosphate + 4-hydroxybenzoate = 4-hydroxy-3-(all-trans-octaprenyl)benzoate + diphosphate. It participates in cofactor biosynthesis; ubiquinone biosynthesis. Catalyzes the prenylation of para-hydroxybenzoate (PHB) with an all-trans polyprenyl group. Mediates the second step in the final reaction sequence of ubiquinone-8 (UQ-8) biosynthesis, which is the condensation of the polyisoprenoid side chain with PHB, generating the first membrane-bound Q intermediate 3-octaprenyl-4-hydroxybenzoate. The protein is 4-hydroxybenzoate octaprenyltransferase of Shigella flexneri.